The following is a 561-amino-acid chain: uncharacterized protein (561 aa).

Polar residues predominate over residues 1 to 11 (MSQVSLPSQLK). 2 disordered regions span residues 1–22 (MSQV…SRCR) and 522–561 (CSLP…IMLP). Residues 541 to 561 (QQPQQAQAEQAQQPQQQIMLP) are compositionally biased toward low complexity.

It to Synechocystis PCC 6803 sll0335 and to M.tuberculosis Rv2567.

This is an uncharacterized protein from Mycobacterium leprae (strain TN).